A 250-amino-acid polypeptide reads, in one-letter code: Aquaporin SIP2-1 (250 aa).

The next 2 membrane-spanning stretches (helical) occupy residues 14–34 (PWLV…GALV) and 55–75 (VALS…TGGA). Residues 78–80 (NPL) carry the NPA 1 motif. Transmembrane regions (helical) follow at residues 95–115 (LYLF…ILGV), 132–152 (SVGV…VVIV), 178–200 (FHLL…AWAY), and 211–231 (LLVY…VVTL). The NPA 2 motif lies at 191 to 193 (NPA).

The protein belongs to the MIP/aquaporin (TC 1.A.8) family. SIP (TC 1.A.8.10) subfamily. Expressed in leaves and anthers, and at lower levels in roots.

It localises to the membrane. Aquaporins facilitate the transport of water and small neutral solutes across cell membranes. The protein is Aquaporin SIP2-1 (SIP2-1) of Oryza sativa subsp. japonica (Rice).